We begin with the raw amino-acid sequence, 94 residues long: Small ribosomal subunit protein uS17 (94 aa).

This sequence belongs to the universal ribosomal protein uS17 family. In terms of assembly, part of the 30S ribosomal subunit.

Its function is as follows. One of the primary rRNA binding proteins, it binds specifically to the 5'-end of 16S ribosomal RNA. The chain is Small ribosomal subunit protein uS17 from Streptomyces avermitilis (strain ATCC 31267 / DSM 46492 / JCM 5070 / NBRC 14893 / NCIMB 12804 / NRRL 8165 / MA-4680).